The following is a 234-amino-acid chain: Thiamine-phosphate synthase (234 aa).

Residues Gln52 to Lys56 and Asn84 each bind 4-amino-2-methyl-5-(diphosphooxymethyl)pyrimidine. Residues Asp85 and Asp104 each contribute to the Mg(2+) site. 4-amino-2-methyl-5-(diphosphooxymethyl)pyrimidine is bound at residue Ser123. Ser150–Thr152 lines the 2-[(2R,5Z)-2-carboxy-4-methylthiazol-5(2H)-ylidene]ethyl phosphate pocket. A 4-amino-2-methyl-5-(diphosphooxymethyl)pyrimidine-binding site is contributed by Lys153. Gly180 lines the 2-[(2R,5Z)-2-carboxy-4-methylthiazol-5(2H)-ylidene]ethyl phosphate pocket.

It belongs to the thiamine-phosphate synthase family. Mg(2+) is required as a cofactor.

The catalysed reaction is 2-[(2R,5Z)-2-carboxy-4-methylthiazol-5(2H)-ylidene]ethyl phosphate + 4-amino-2-methyl-5-(diphosphooxymethyl)pyrimidine + 2 H(+) = thiamine phosphate + CO2 + diphosphate. The enzyme catalyses 2-(2-carboxy-4-methylthiazol-5-yl)ethyl phosphate + 4-amino-2-methyl-5-(diphosphooxymethyl)pyrimidine + 2 H(+) = thiamine phosphate + CO2 + diphosphate. It carries out the reaction 4-methyl-5-(2-phosphooxyethyl)-thiazole + 4-amino-2-methyl-5-(diphosphooxymethyl)pyrimidine + H(+) = thiamine phosphate + diphosphate. It participates in cofactor biosynthesis; thiamine diphosphate biosynthesis; thiamine phosphate from 4-amino-2-methyl-5-diphosphomethylpyrimidine and 4-methyl-5-(2-phosphoethyl)-thiazole: step 1/1. Functionally, condenses 4-methyl-5-(beta-hydroxyethyl)thiazole monophosphate (THZ-P) and 2-methyl-4-amino-5-hydroxymethyl pyrimidine pyrophosphate (HMP-PP) to form thiamine monophosphate (TMP). The chain is Thiamine-phosphate synthase from Nitrosospira multiformis (strain ATCC 25196 / NCIMB 11849 / C 71).